Consider the following 1100-residue polypeptide: Tyrosine-protein kinase JAK3 (1100 aa).

The cytokine/interferon/growth hormone receptors stretch occupies residues 1 to 223 (MAPPSEETPL…RRTVVQALRR (223 aa)). Ser17 is subject to Phosphoserine. One can recognise an FERM domain in the interval 24-353 (GALHVLLPPR…GYFRLICDSR (330 aa)). An SH2; atypical domain is found at 372–472 (LCHGPITLDF…GTALNLTSCC (101 aa)). The Protein kinase 1 domain maps to 517–777 (LEWHENLGHG…AILRDLNGLI (261 aa)). Tyr781 carries the post-translational modification Phosphotyrosine; by autocatalysis. Residues 818-1091 (LKYISLLGKG…PAFDTLSPQL (274 aa)) form the Protein kinase 2 domain. Residues 824–832 (LGKGNFGSV) and Lys851 contribute to the ATP site. A phosphotyrosine mark is found at Tyr900 and Tyr935. Asp945 (proton acceptor) is an active-site residue. Tyr976 and Tyr977 each carry phosphotyrosine; by autocatalysis.

Belongs to the protein kinase superfamily. Tyr protein kinase family. JAK subfamily. Interacts with STAM2 and MYO18A. Interacts with SHB. Interacts with CD69. Post-translationally, autophosphorylated, leading to regulate its activity. IL2 promotes phosphorylation on tyrosine residues, including autophosphorylation on Tyr-781. Dephosphorylation of Tyr-976 and Tyr-977 by PTPN2 negatively regulates cytokine-mediated signaling. In contrast with the ubiquitous expression of the other JAKs, JAK3 is predominantly expressed in hematopoietic tissues.

It localises to the endomembrane system. The protein localises to the cytoplasm. The enzyme catalyses L-tyrosyl-[protein] + ATP = O-phospho-L-tyrosyl-[protein] + ADP + H(+). Non-receptor tyrosine kinase involved in various processes such as cell growth, development, or differentiation. Mediates essential signaling events in both innate and adaptive immunity and plays a crucial role in hematopoiesis during T-cells development. In the cytoplasm, plays a pivotal role in signal transduction via its association with type I receptors sharing the common subunit gamma such as IL2R, IL4R, IL7R, IL9R, IL15R and IL21R. Following ligand binding to cell surface receptors, phosphorylates specific tyrosine residues on the cytoplasmic tails of the receptor, creating docking sites for STATs proteins. Subsequently, phosphorylates the STATs proteins once they are recruited to the receptor. Phosphorylated STATs then form homodimer or heterodimers and translocate to the nucleus to activate gene transcription. For example, upon IL2R activation by IL2, JAK1 and JAK3 molecules bind to IL2R beta (IL2RB) and gamma chain (IL2RG) subunits inducing the tyrosine phosphorylation of both receptor subunits on their cytoplasmic domain. Then, STAT5A and STAT5B are recruited, phosphorylated and activated by JAK1 and JAK3. Once activated, dimerized STAT5 translocates to the nucleus and promotes the transcription of specific target genes in a cytokine-specific fashion. The protein is Tyrosine-protein kinase JAK3 of Rattus norvegicus (Rat).